The following is a 484-amino-acid chain: Pheophytinase, chloroplastic (484 aa).

Residues 1–47 constitute a chloroplast transit peptide; it reads MEIISLNVVPQCSVVTWSSKLATKRLVPNRSSLLFSGVKKSRLVIRS.

This sequence belongs to the AB hydrolase superfamily. Interacts with HCAR, RCCR, PAO and the LHCII complex. Part of a SGR1-CCE-LHCII complex, which acts in chlorophyll breakdown.

The protein localises to the plastid. It is found in the chloroplast thylakoid membrane. Its subcellular location is the chloroplast stroma. Functionally, alpha/beta hydrolase dephytylating specifically the Mg-free chlorophyll pigment (pheophytin), yielding pheophorbide. No activity on chlorophyll. Belongs to the chlorophyll catabolic enzymes (CCEs). The polypeptide is Pheophytinase, chloroplastic (PPH) (Arabidopsis thaliana (Mouse-ear cress)).